The chain runs to 172 residues: Small ribosomal subunit protein uS5 (172 aa).

The 64-residue stretch at 17-80 (MREKMIAVNR…EEARRKMIKV (64 aa)) folds into the S5 DRBM domain.

Belongs to the universal ribosomal protein uS5 family. As to quaternary structure, part of the 30S ribosomal subunit. Contacts proteins S4 and S8.

Its function is as follows. With S4 and S12 plays an important role in translational accuracy. Located at the back of the 30S subunit body where it stabilizes the conformation of the head with respect to the body. This chain is Small ribosomal subunit protein uS5, found in Herminiimonas arsenicoxydans.